A 369-amino-acid polypeptide reads, in one-letter code: Glycolate oxidase 1 (369 aa).

An FMN hydroxy acid dehydrogenase domain is found at 1–360 (MGEITNVMEY…TRKHIITESD (360 aa)). Tyrosine 25 is a glyoxylate binding site. FMN-binding positions include 78 to 80 (PTA), serine 107, 128 to 130 (QLY), and threonine 156. Tyrosine 130 contacts glyoxylate. A glyoxylate-binding site is contributed by arginine 165. FMN-binding residues include lysine 231 and serine 253. Residues histidine 255 and arginine 258 each coordinate glyoxylate. Histidine 255 serves as the catalytic Proton acceptor. FMN-binding positions include 286-290 (DGGVR) and 309-310 (GR).

It belongs to the FMN-dependent alpha-hydroxy acid dehydrogenase family. Homotetramer. It depends on FMN as a cofactor.

Its subcellular location is the peroxisome. The enzyme catalyses glycolate + O2 = glyoxylate + H2O2. It functions in the pathway photosynthesis; photorespiration; glycine from 2-phosphoglycolate: step 2/3. Catalyzes the oxidation of glycolate to glyoxylate, with a reduction of O2 to H2O2. Is an essential enzyme in photorespiration in plants. Photorespiration plays a vital role in C4 photosynthesis in Z.mays and is essential for maize seedling development and maintaining low (non-toxic) levels of glycolate. This Zea mays (Maize) protein is Glycolate oxidase 1.